Consider the following 1442-residue polypeptide: Sulfite reductase [NADPH] subunit beta (1442 aa).

Residues 682–831 (LHVYYASDGG…AYSEWEPKLW (150 aa)) form the Flavodoxin-like domain. A Phosphoserine modification is found at S903. Residues C1300, C1306, C1345, and C1349 each coordinate [4Fe-4S] cluster. Position 1349 (C1349) interacts with siroheme.

The protein belongs to the nitrite and sulfite reductase 4Fe-4S domain family. As to quaternary structure, alpha(2)-beta(2). The alpha component is a flavoprotein, the beta component is a hemoprotein. Siroheme is required as a cofactor. [4Fe-4S] cluster serves as cofactor.

It localises to the cytoplasm. It carries out the reaction hydrogen sulfide + 3 NADP(+) + 3 H2O = sulfite + 3 NADPH + 4 H(+). The protein operates within sulfur metabolism; hydrogen sulfide biosynthesis; hydrogen sulfide from sulfite (NADPH route): step 1/1. Its function is as follows. Catalyzes the reduction of sulfite to sulfide, one of several activities required for the biosynthesis of L-cysteine from sulfate. This chain is Sulfite reductase [NADPH] subunit beta (MET5), found in Saccharomyces cerevisiae (strain ATCC 204508 / S288c) (Baker's yeast).